The following is a 192-amino-acid chain: Peptidyl-tRNA hydrolase (192 aa).

Tyrosine 17 provides a ligand contact to tRNA. Histidine 22 (proton acceptor) is an active-site residue. TRNA-binding residues include phenylalanine 68, asparagine 70, and asparagine 116.

The protein belongs to the PTH family. As to quaternary structure, monomer.

The protein localises to the cytoplasm. It carries out the reaction an N-acyl-L-alpha-aminoacyl-tRNA + H2O = an N-acyl-L-amino acid + a tRNA + H(+). Hydrolyzes ribosome-free peptidyl-tRNAs (with 1 or more amino acids incorporated), which drop off the ribosome during protein synthesis, or as a result of ribosome stalling. In terms of biological role, catalyzes the release of premature peptidyl moieties from peptidyl-tRNA molecules trapped in stalled 50S ribosomal subunits, and thus maintains levels of free tRNAs and 50S ribosomes. The protein is Peptidyl-tRNA hydrolase of Buchnera aphidicola subsp. Cinara cedri (strain Cc).